The following is a 360-amino-acid chain: Chorismate synthase (360 aa).

Residues R48 and R54 each coordinate NADP(+). FMN-binding positions include 125–127, 246–247, G286, 301–305, and R327; these read RSS, NA, and KPTSS.

This sequence belongs to the chorismate synthase family. As to quaternary structure, homotetramer. FMNH2 serves as cofactor.

It catalyses the reaction 5-O-(1-carboxyvinyl)-3-phosphoshikimate = chorismate + phosphate. It participates in metabolic intermediate biosynthesis; chorismate biosynthesis; chorismate from D-erythrose 4-phosphate and phosphoenolpyruvate: step 7/7. Its function is as follows. Catalyzes the anti-1,4-elimination of the C-3 phosphate and the C-6 proR hydrogen from 5-enolpyruvylshikimate-3-phosphate (EPSP) to yield chorismate, which is the branch point compound that serves as the starting substrate for the three terminal pathways of aromatic amino acid biosynthesis. This reaction introduces a second double bond into the aromatic ring system. In Haemophilus ducreyi (strain 35000HP / ATCC 700724), this protein is Chorismate synthase.